The sequence spans 563 residues: MNFVEAIRRRISAAVVQALEGARNAKEVNVGPIPPFALEVPREKQHGDFATNVAMLMAREARMNPRQLAEKIVARIDRGDWLKDVQVAGPGFINFTLHHAWLYPVLPAVQQADEAYGASKVGAGRRVQVEFVSANPTGLLHMGNARGAALGDTLANLLRLAGFDVQKEFYINDAGNQIENFAKSLEARYLQLLGRDVPFPEEGYHGEDIVETMRGLIAKEGDKYLALESSLRREMLVKYALREKLDAIRRTLERFGVVYDVWFSEQSLHDSGAIQQTLERLRANGYIYENEGALWFKATALGEEKDEVLVRSNGIPTYFAADIAYHKNKFDRGFDWVINIWGADHHGHVSRMKNAVKAVGYDPKKLDVILMQLVRLYKGGEIVRMSKRTGQYITLDELIEEVGKDAARFFFVMRGADAHLDFDLDLAKRQSSENPVFYVQYAHARICSILRTAQEAGYAVPQGQQVEAGLDLTVLDHPAELALIRKIADLPDEVARAATQMEPHRMARYAQDLAALFHSFYTHCRVLTDEKELRDARLLLVDDSRIVLRNVLHCMGLTAPERM.

A 'HIGH' region motif is present at residues A134–N144.

The protein belongs to the class-I aminoacyl-tRNA synthetase family. Monomer.

It is found in the cytoplasm. The catalysed reaction is tRNA(Arg) + L-arginine + ATP = L-arginyl-tRNA(Arg) + AMP + diphosphate. This Heliobacterium modesticaldum (strain ATCC 51547 / Ice1) protein is Arginine--tRNA ligase.